The primary structure comprises 663 residues: uncharacterized protein (663 aa).

The signal sequence occupies residues 1–29; the sequence is MLDIGVIGRLKFATAFMAMSLLLVPAAEA.

The protein belongs to the bacterial solute-binding protein 5 family.

It localises to the periplasm. Its function is as follows. Possible binding-protein with either a transport or enzymatic activity. This is an uncharacterized protein from Sinorhizobium fredii (strain NBRC 101917 / NGR234).